The chain runs to 205 residues: Thymidylate kinase (205 aa).

Residue 11–18 (GVEGSGKS) coordinates ATP.

The protein belongs to the thymidylate kinase family.

The catalysed reaction is dTMP + ATP = dTDP + ADP. Functionally, phosphorylation of dTMP to form dTDP in both de novo and salvage pathways of dTTP synthesis. In Ruthia magnifica subsp. Calyptogena magnifica, this protein is Thymidylate kinase.